The sequence spans 375 residues: Acyl-coenzyme A diphosphatase NUDT19 (375 aa).

One can recognise a Nudix hydrolase domain in the interval 15 to 263 (AASIVLAAGW…IWLPPPQFYE (249 aa)). The tract at residues 91-116 (LGPAPFSRTAFPSLPDTDDHKTDNTG) is disordered. The Nudix box signature appears at 116–137 (GTLPEDVAFRICAVREAFEEAG). Mg(2+) is bound by residues Glu131 and Glu135. The short motif at 373–375 (SHL) is the Microbody targeting signal element.

This sequence belongs to the Nudix hydrolase family. Monomer. Mg(2+) serves as cofactor. The cofactor is Mn(2+).

It localises to the peroxisome. It carries out the reaction an acyl-CoA + H2O = an acyl-4'-phosphopantetheine + adenosine 3',5'-bisphosphate + 2 H(+). The enzyme catalyses CoA + H2O = (R)-4'-phosphopantetheine + adenosine 3',5'-bisphosphate + 2 H(+). The catalysed reaction is hexanoyl-CoA + H2O = hexanoyl-4'-phosphopantetheine + adenosine 3',5'-bisphosphate + 2 H(+). It catalyses the reaction octanoyl-CoA + H2O = S-octanoyl-4'-phosphopantetheine + adenosine 3',5'-bisphosphate + 2 H(+). It carries out the reaction butanoyl-CoA + H2O = S-butanoyl-4'-phosphopantetheine + adenosine 3',5'-bisphosphate + 2 H(+). The enzyme catalyses propanoyl-CoA + H2O = propanoyl-4'-phosphopantetheine + adenosine 3',5'-bisphosphate + 2 H(+). The catalysed reaction is malonyl-CoA + H2O = malonyl-4'-phosphopantetheine + adenosine 3',5'-bisphosphate + 2 H(+). It catalyses the reaction succinyl-CoA + H2O = succinyl-4'-phosphopantetheine + adenosine 3',5'-bisphosphate + 2 H(+). It carries out the reaction choloyl-CoA + H2O = S-choloyl-4'-phosphopantetheine + adenosine 3',5'-bisphosphate + 2 H(+). The enzyme catalyses 4,8-dimethylnonanoyl-CoA + H2O = S-(4,8-dimethylnonanoyl)-4'-phosphopantetheine + adenosine 3',5'-bisphosphate + 2 H(+). The catalysed reaction is (9Z,12Z,15Z)-octadecatrienoyl-CoA + H2O = S-(9Z,12Z,15Z-octadecatrienoyl)-4'-phosphopantetheine + adenosine 3',5'-bisphosphate + 2 H(+). It catalyses the reaction (9Z,12Z)-octadecadienoyl-CoA + H2O = S-(9Z,12Z-octadecadienoyl)-4'-phosphopantetheine + adenosine 3',5'-bisphosphate + 2 H(+). It carries out the reaction (9Z)-hexadecenoyl-CoA + H2O = S-(9Z-hexadecenoyl)-4'-phosphopantetheine + adenosine 3',5'-bisphosphate + 2 H(+). The enzyme catalyses (9Z)-tetradecenoyl-CoA + H2O = S-(9Z-tetradecenoyl)-4'-phosphopantetheine + adenosine 3',5'-bisphosphate + 2 H(+). The catalysed reaction is (6Z)-octenoyl-CoA + H2O = S-(6Z-octenoyl)-4'-phosphopantetheine + adenosine 3',5'-bisphosphate + 2 H(+). It catalyses the reaction hexadecanoyl-CoA + H2O = S-hexadecanoyl-4'-phosphopantetheine + adenosine 3',5'-bisphosphate + 2 H(+). It carries out the reaction tetradecanoyl-CoA + H2O = tetradecanoyl-4'-phosphopantetheine + adenosine 3',5'-bisphosphate + 2 H(+). The enzyme catalyses dodecanoyl-CoA + H2O = S-dodecanoyl-4'-phosphopantetheine + adenosine 3',5'-bisphosphate + 2 H(+). The catalysed reaction is a 5'-end CoA-ribonucleoside in mRNA + H2O = a 5'-end phospho-adenosine-phospho-ribonucleoside in mRNA + (R)-4'-phosphopantetheine + 2 H(+). Functionally, fatty acyl-coenzyme A (CoA) diphosphatase that hydrolyzes fatty acyl-CoA to yield acyl-4'-phosphopantetheine and adenosine 3',5'-bisphosphate. Mediates the hydrolysis of a wide range of CoA esters, including choloyl-CoA and branched-chain fatty-acyl-CoA esters and at low substrate concentrations medium and long-chain fatty-acyl-CoA esters are the primary substrates. Highest activity seen with medium-chain acyl-CoA esters and higher rates of activity seen with the unsaturated acyl-CoA esters compared with the saturated esters. Exhibits decapping activity towards dpCoA-capped RNAs in vitro. The chain is Acyl-coenzyme A diphosphatase NUDT19 (NUDT19) from Homo sapiens (Human).